Here is a 265-residue protein sequence, read N- to C-terminus: Small ribosomal subunit protein uS3 (265 aa).

The 73-residue stretch at 39-111 (IREFLNENFS…EVILNIIEVR (73 aa)) folds into the KH type-2 domain. The tract at residues 224-250 (FEAGNQRRGQKRRPRNDQPVKDLNKEK) is disordered. Positions 238-250 (RNDQPVKDLNKEK) are enriched in basic and acidic residues.

Belongs to the universal ribosomal protein uS3 family. Part of the 30S ribosomal subunit. Forms a tight complex with proteins S10 and S14.

Binds the lower part of the 30S subunit head. Binds mRNA in the 70S ribosome, positioning it for translation. The sequence is that of Small ribosomal subunit protein uS3 from Acholeplasma laidlawii.